The following is a 460-amino-acid chain: Bifunctional protein GlmU (460 aa).

The tract at residues 1-235 (MALSAAIVLA…PLTVEGVNDR (235 aa)) is pyrophosphorylase. UDP-N-acetyl-alpha-D-glucosamine is bound by residues 9–12 (LAAG), Lys-23, Gln-76, and 81–82 (GT). Asp-109 serves as a coordination point for Mg(2+). UDP-N-acetyl-alpha-D-glucosamine contacts are provided by Gly-146, Glu-161, Asn-176, and Asn-233. Asn-233 is a Mg(2+) binding site. The tract at residues 236–256 (VQLAALSKTYNRRVCERWMRD) is linker. The N-acetyltransferase stretch occupies residues 257–460 (GVTILDPETT…VEGWKPAWER (204 aa)). Positions 338 and 356 each coordinate UDP-N-acetyl-alpha-D-glucosamine. His-368 serves as the catalytic Proton acceptor. Residues Tyr-371 and Asn-382 each contribute to the UDP-N-acetyl-alpha-D-glucosamine site. Acetyl-CoA contacts are provided by residues 391-392 (NY) and Ala-428.

It in the N-terminal section; belongs to the N-acetylglucosamine-1-phosphate uridyltransferase family. The protein in the C-terminal section; belongs to the transferase hexapeptide repeat family. Homotrimer. Mg(2+) is required as a cofactor.

It is found in the cytoplasm. It catalyses the reaction alpha-D-glucosamine 1-phosphate + acetyl-CoA = N-acetyl-alpha-D-glucosamine 1-phosphate + CoA + H(+). The enzyme catalyses N-acetyl-alpha-D-glucosamine 1-phosphate + UTP + H(+) = UDP-N-acetyl-alpha-D-glucosamine + diphosphate. The protein operates within nucleotide-sugar biosynthesis; UDP-N-acetyl-alpha-D-glucosamine biosynthesis; N-acetyl-alpha-D-glucosamine 1-phosphate from alpha-D-glucosamine 6-phosphate (route II): step 2/2. Its pathway is nucleotide-sugar biosynthesis; UDP-N-acetyl-alpha-D-glucosamine biosynthesis; UDP-N-acetyl-alpha-D-glucosamine from N-acetyl-alpha-D-glucosamine 1-phosphate: step 1/1. It functions in the pathway bacterial outer membrane biogenesis; LPS lipid A biosynthesis. Catalyzes the last two sequential reactions in the de novo biosynthetic pathway for UDP-N-acetylglucosamine (UDP-GlcNAc). The C-terminal domain catalyzes the transfer of acetyl group from acetyl coenzyme A to glucosamine-1-phosphate (GlcN-1-P) to produce N-acetylglucosamine-1-phosphate (GlcNAc-1-P), which is converted into UDP-GlcNAc by the transfer of uridine 5-monophosphate (from uridine 5-triphosphate), a reaction catalyzed by the N-terminal domain. This Bifidobacterium longum (strain NCC 2705) protein is Bifunctional protein GlmU.